The sequence spans 83 residues: Toxin To12 (83 aa).

The N-terminal stretch at 1 to 19 is a signal peptide; the sequence is MKGLILFICGFMMIGVILA. The LCN-type CS-alpha/beta domain maps to 20-82; that stretch reads KEGYPMDHEG…VWDYYNNKCG (63 aa). Disulfide bonds link Cys30–Cys81, Cys34–Cys57, Cys42–Cys62, and Cys46–Cys64. A Cysteine amide modification is found at Cys81.

This sequence belongs to the long (4 C-C) scorpion toxin superfamily. Sodium channel inhibitor family. Beta subfamily. As to expression, expressed by the venom gland.

It localises to the secreted. Functionally, beta toxins bind voltage-independently at site-4 of sodium channels (Nav) and shift the voltage of activation toward more negative potentials thereby affecting sodium channel activation and promoting spontaneous and repetitive firing. The chain is Toxin To12 from Tityus obscurus (Amazonian scorpion).